A 359-amino-acid chain; its full sequence is Phosphoserine aminotransferase (359 aa).

Residue R41 coordinates L-glutamate. Pyridoxal 5'-phosphate-binding positions include 75-76 (AS), W99, T147, D166, and Q189. At K190 the chain carries N6-(pyridoxal phosphate)lysine. 231–232 (NT) serves as a coordination point for pyridoxal 5'-phosphate.

It belongs to the class-V pyridoxal-phosphate-dependent aminotransferase family. SerC subfamily. Homodimer. Requires pyridoxal 5'-phosphate as cofactor.

It localises to the cytoplasm. It carries out the reaction O-phospho-L-serine + 2-oxoglutarate = 3-phosphooxypyruvate + L-glutamate. It catalyses the reaction 4-(phosphooxy)-L-threonine + 2-oxoglutarate = (R)-3-hydroxy-2-oxo-4-phosphooxybutanoate + L-glutamate. It functions in the pathway amino-acid biosynthesis; L-serine biosynthesis; L-serine from 3-phospho-D-glycerate: step 2/3. Its pathway is cofactor biosynthesis; pyridoxine 5'-phosphate biosynthesis; pyridoxine 5'-phosphate from D-erythrose 4-phosphate: step 3/5. Catalyzes the reversible conversion of 3-phosphohydroxypyruvate to phosphoserine and of 3-hydroxy-2-oxo-4-phosphonooxybutanoate to phosphohydroxythreonine. In Azobacteroides pseudotrichonymphae genomovar. CFP2, this protein is Phosphoserine aminotransferase.